The sequence spans 281 residues: MAGITSTVGFNAILAGATKTVSHPVKSKLFGLRLCVPEFSIVSLSPYHHRRCPAITCRYGGGGGGGSRFPGDRRGRQKESEDDDSLDISAIRSATVRLIDDQQNMIGLVSKEEAVRRAEDAELDLVILSPDADPPVVRMMDYSKYRYEQQKRKKEQQKKTTRMDLKELKMGYNIDQHDYSVRMRAARKFLQDGDKVKVIVNMKGRENEFRNIAIELLRRFQTEIGELGTEESKNFRDRNLFIVLVPNKEVIRKVQEPPPKKKKKPADDKVSAANITATQDI.

The N-terminal 51 residues, 1 to 51, are a transit peptide targeting the chloroplast; it reads MAGITSTVGFNAILAGATKTVSHPVKSKLFGLRLCVPEFSIVSLSPYHHRR. Disordered regions lie at residues 63–86 and 253–281; these read GGGG…DDSL and KVQE…TQDI. 2 stretches are compositionally biased toward basic and acidic residues: residues 70 to 79 and 253 to 270; these read PGDRRGRQKE and KVQE…DDKV.

This sequence belongs to the IF-3 family. Monomer.

Its subcellular location is the plastid. It is found in the chloroplast. In terms of biological role, chloroplast translation initiation factor that is essential for the coordination of leaf and chloroplast development. IF-3 binds to the 30S ribosomal subunit and shifts the equilibrium between 70S ribosomes and their 50S and 30S subunits in favor of the free subunits, thus enhancing the availability of 30S subunits on which protein synthesis initiation begins. In Arabidopsis thaliana (Mouse-ear cress), this protein is Translation initiation factor IF3-4, chloroplastic.